The chain runs to 460 residues: Chromosomal replication initiator protein DnaA (460 aa).

The interval 1-84 (MAVSLWQQCI…RFDIGSRPSA (84 aa)) is domain I, interacts with DnaA modulators. Residues 84–123 (AKKPEPAPVAAVRVPSPQTKASVGTAFNTTEPVANTNHRS) form a domain II region. Residues 124–340 (NINPTYQFDN…GALNRVIANA (217 aa)) form a domain III, AAA+ region region. ATP contacts are provided by G168, G170, K171, and T172. Residues 341 to 460 (NFTGRPITID…YANLIRTLSS (120 aa)) form a domain IV, binds dsDNA region.

This sequence belongs to the DnaA family. In terms of assembly, oligomerizes as a right-handed, spiral filament on DNA at oriC.

The protein localises to the cytoplasm. Its function is as follows. Plays an essential role in the initiation and regulation of chromosomal replication. ATP-DnaA binds to the origin of replication (oriC) to initiate formation of the DNA replication initiation complex once per cell cycle. Binds the DnaA box (a 9 base pair repeat at the origin) and separates the double-stranded (ds)DNA. Forms a right-handed helical filament on oriC DNA; dsDNA binds to the exterior of the filament while single-stranded (ss)DNA is stabiized in the filament's interior. The ATP-DnaA-oriC complex binds and stabilizes one strand of the AT-rich DNA unwinding element (DUE), permitting loading of DNA polymerase. After initiation quickly degrades to an ADP-DnaA complex that is not apt for DNA replication. Binds acidic phospholipids. The protein is Chromosomal replication initiator protein DnaA of Shewanella oneidensis (strain ATCC 700550 / JCM 31522 / CIP 106686 / LMG 19005 / NCIMB 14063 / MR-1).